A 213-amino-acid chain; its full sequence is Protein SRN2 (213 aa).

The 86-residue stretch at 128–213 (SKYVASWQDY…TWDKQGNLKY (86 aa)) folds into the VPS37 C-terminal domain.

It belongs to the VPS37 family. Component of the ESCRT-I complex (endosomal sorting complex required for transport I) which consists of STP22, VPS28, SRN2 and MVB12 in a 1:1:1:1 stoichiometry. Interacts with STP22 and MVB12.

It localises to the cytoplasm. Its subcellular location is the endosome. The protein resides in the late endosome membrane. In terms of biological role, component of the ESCRT-I complex, a regulator of vesicular trafficking process. Required for normal endocytic and biosynthetic traffic to the yeast vacuole. The chain is Protein SRN2 (SRN2) from Saccharomyces cerevisiae (strain ATCC 204508 / S288c) (Baker's yeast).